Here is a 314-residue protein sequence, read N- to C-terminus: Glycerate dehydrogenase (314 aa).

Residues Thr-74, 157–158 (AL), 228–230 (TAR), and Asp-254 contribute to the NAD(+) site. The active site involves Arg-230. Glu-259 is a catalytic residue. The active-site Proton donor is the His-280. 280 to 283 (HVAW) lines the NAD(+) pocket.

It belongs to the D-isomer specific 2-hydroxyacid dehydrogenase family. Homodimer.

Its subcellular location is the cytoplasm. The enzyme catalyses (R)-glycerate + NAD(+) = 3-hydroxypyruvate + NADH + H(+). Its pathway is one-carbon metabolism; formaldehyde assimilation via serine pathway. Its function is as follows. Plays a central role in assimilation of carbon. It converts hydroxypyruvate to glycerate as a key step in the serine cycle, and may also play an important role in C2 reactions, by interconverting glyoxylate and glycolate. The chain is Glycerate dehydrogenase (hprA) from Methylorubrum extorquens (strain ATCC 14718 / DSM 1338 / JCM 2805 / NCIMB 9133 / AM1) (Methylobacterium extorquens).